The primary structure comprises 708 residues: B-cell lymphoma 6 protein homolog (708 aa).

One can recognise a BTB domain in the interval 32 to 99 (TDVVIIVNRE…MYTSRLNLRE (68 aa)). The span at 303–317 (AKEEERTSSEDEISQ) shows a compositional bias: basic and acidic residues. Disordered regions lie at residues 303–371 (AKEE…KSPT) and 431–470 (PTKMSVNGEDSNIPQASRLNNIVNRSRDGSPRSSEGQSPL). 2 stretches are compositionally biased toward polar residues: residues 333 to 370 (SPQSPQKSDCQPNSPTESSSSKNARISQNSNSLFTKSP) and 431 to 454 (PTKMSVNGEDSNIPQASRLNNIVN). C2H2-type zinc fingers lie at residues 520–543 (FFCNECDCRFSEEASLKRHSLQVH), 548–570 (YKCDRCQASFRYKGNLASHKTVH), 576–598 (YRCNICGAQFNRPANLKTHTRIH), 604–626 (YKCETCGARFVQVAHLRAHVLIH), 632–654 (YPCEICGTRFRHLQTLKSHLRIH), and 660–683 (YHCEKCNLHFRHKSQLRLHLRQKH).

It is found in the nucleus. Functionally, transcriptional repressor mainly required for germinal center (GC) formation and antibody affinity maturation which has different mechanisms of action specific to the lineage and biological functions. Forms complexes with different corepressors and histone deacetylases to repress the transcriptional expression of different subsets of target genes. Represses its target genes by binding directly to the DNA sequence 5'-TTCCTAGAA-3' (BCL6-binding site) or indirectly by repressing the transcriptional activity of transcription factors. In GC B-cells, represses genes that function in differentiation, inflammation, apoptosis and cell cycle control, also autoregulates its transcriptional expression and up-regulates, indirectly, the expression of some genes important for GC reactions, such as AICDA, through the repression of microRNAs expression. An important function is to allow GC B-cells to proliferate very rapidly in response to T-cell dependent antigens and tolerate the physiological DNA breaks required for immunglobulin class switch recombination and somatic hypermutation without inducing a p53/TP53-dependent apoptotic response. In follicular helper CD4(+) T-cells (T(FH) cells), promotes the expression of T(FH)-related genes but inhibits the differentiation of T(H)1, T(H)2 and T(H)17 cells. Also required for the establishment and maintenance of immunological memory for both T- and B-cells. Suppresses macrophage proliferation through competition with STAT5 for STAT-binding motifs binding on certain target genes, such as CCL2 and CCND2. In response to genotoxic stress, controls cell cycle arrest in GC B-cells in both p53/TP53-dependedent and -independent manners. Besides, also controls neurogenesis through the alteration of the composition of NOTCH-dependent transcriptional complexes at selective NOTCH targets, such as HES5, including the recruitment of the deacetylase SIRT1 and resulting in an epigenetic silencing leading to neuronal differentiation. The polypeptide is B-cell lymphoma 6 protein homolog (Gallus gallus (Chicken)).